A 289-amino-acid polypeptide reads, in one-letter code: Diaminopimelate epimerase (289 aa).

Substrate-binding residues include N11 and N78. The active-site Proton donor is C87. Substrate contacts are provided by residues 88 to 89, N163, N199, and 217 to 218; these read GN and ER. Catalysis depends on C226, which acts as the Proton acceptor. 227 to 228 serves as a coordination point for substrate; the sequence is GT.

This sequence belongs to the diaminopimelate epimerase family. Homodimer.

Its subcellular location is the cytoplasm. It catalyses the reaction (2S,6S)-2,6-diaminopimelate = meso-2,6-diaminopimelate. Its pathway is amino-acid biosynthesis; L-lysine biosynthesis via DAP pathway; DL-2,6-diaminopimelate from LL-2,6-diaminopimelate: step 1/1. Catalyzes the stereoinversion of LL-2,6-diaminopimelate (L,L-DAP) to meso-diaminopimelate (meso-DAP), a precursor of L-lysine and an essential component of the bacterial peptidoglycan. The protein is Diaminopimelate epimerase of Rhodococcus opacus (strain B4).